Here is a 100-residue protein sequence, read N- to C-terminus: Large ribosomal subunit protein bL21 (100 aa).

It belongs to the bacterial ribosomal protein bL21 family. In terms of assembly, part of the 50S ribosomal subunit. Contacts protein L20.

Functionally, this protein binds to 23S rRNA in the presence of protein L20. This Ureaplasma urealyticum serovar 10 (strain ATCC 33699 / Western) protein is Large ribosomal subunit protein bL21.